A 166-amino-acid chain; its full sequence is Interferon gamma (166 aa).

The N-terminal stretch at 1–23 (MNYTSYILAFQLCVILCSSGCNC) is a signal peptide. The residue at position 24 (Gln24) is a Pyrrolidone carboxylic acid. Asn39 and Asn106 each carry an N-linked (GlcNAc...) asparagine glycan.

This sequence belongs to the type II (or gamma) interferon family. Homodimer. Interacts with IFNGR1 (via extracellular domain); this interaction promotes IFNGR1 dimerization. As to expression, released primarily from activated T lymphocytes.

Its subcellular location is the secreted. Its function is as follows. Type II interferon produced by immune cells such as T-cells and NK cells that plays crucial roles in antimicrobial, antiviral, and antitumor responses by activating effector immune cells and enhancing antigen presentation. Primarily signals through the JAK-STAT pathway after interaction with its receptor IFNGR1 to affect gene regulation. Upon IFNG binding, IFNGR1 intracellular domain opens out to allow association of downstream signaling components JAK2, JAK1 and STAT1, leading to STAT1 activation, nuclear translocation and transcription of IFNG-regulated genes. Many of the induced genes are transcription factors such as IRF1 that are able to further drive regulation of a next wave of transcription. Plays a role in class I antigen presentation pathway by inducing a replacement of catalytic proteasome subunits with immunoproteasome subunits. In turn, increases the quantity, quality, and repertoire of peptides for class I MHC loading. Increases the efficiency of peptide generation also by inducing the expression of activator PA28 that associates with the proteasome and alters its proteolytic cleavage preference. Up-regulates as well MHC II complexes on the cell surface by promoting expression of several key molecules such as cathepsins B/CTSB, H/CTSH, and L/CTSL. Participates in the regulation of hematopoietic stem cells during development and under homeostatic conditions by affecting their development, quiescence, and differentiation. This chain is Interferon gamma (IFNG), found in Canis lupus familiaris (Dog).